The chain runs to 106 residues: uncharacterized protein (106 aa).

This sequence belongs to the HesB/IscA family.

This is an uncharacterized protein from Sinorhizobium fredii (strain NBRC 101917 / NGR234).